The following is a 276-amino-acid chain: SF-assemblin (276 aa).

The tract at residues 1-31 (MSLRPFETPGGLSSLSPRRRDFSPTRPGTNG) is nonhelical region. The interval 1-37 (MSLRPFETPGGLSSLSPRRRDFSPTRPGTNGPSAKLE) is disordered. A rod region spans residues 32-276 (PSAKLEHVTE…LQEGLKLVSA (245 aa)). Positions 67-145 (LLQESLQRIE…LVRDERESRR (79 aa)) form a coiled coil.

This sequence belongs to the SF-assemblin family.

The protein localises to the cytoplasm. The protein resides in the cytoskeleton. Its function is as follows. Major component of the striated microtubule-associated fibers (SMAFs; system-I-fibers). This is SF-assemblin from Chlamydomonas reinhardtii (Chlamydomonas smithii).